The sequence spans 447 residues: Elongation factor 1-alpha (447 aa).

The tr-type G domain maps to 5-230; sequence KIHISIVVIG…DQINEPKRPS (226 aa). Residues 14–21 are G1; it reads GHVDSGKS. Position 14–21 (14–21) interacts with GTP; that stretch reads GHVDSGKS. N6,N6-dimethyllysine is present on lysine 55. A G2 region spans residues 70–74; sequence GITID. Lysine 79 is modified (N6,N6,N6-trimethyllysine). Residues 91-94 are G3; it reads DAPG. Residues 91–95 and 153–156 contribute to the GTP site; these read DAPGH and NKMD. Residues 153 to 156 are G4; the sequence is NKMD. Position 187 is an N6,N6,N6-trimethyllysine (lysine 187). Positions 194–196 are G5; it reads SGF. Lysine 261 is modified (N6-methyllysine). A 5-glutamyl glycerylphosphorylethanolamine modification is found at glutamate 289. Lysine 306 is subject to N6,N6,N6-trimethyllysine. Glutamate 362 carries the 5-glutamyl glycerylphosphorylethanolamine modification. Position 396 is an N6,N6,N6-trimethyllysine (lysine 396).

Belongs to the TRAFAC class translation factor GTPase superfamily. Classic translation factor GTPase family. EF-Tu/EF-1A subfamily.

It localises to the cytoplasm. In terms of biological role, this protein promotes the GTP-dependent binding of aminoacyl-tRNA to the A-site of ribosomes during protein biosynthesis. The polypeptide is Elongation factor 1-alpha (Hordeum vulgare (Barley)).